A 546-amino-acid polypeptide reads, in one-letter code: Membrane protein insertase YidC (546 aa).

A helical membrane pass occupies residues 8–28; it reads ILLATVLSVGILILWQVIFPT. Positions 31 to 70 are disordered; sequence VPPKPAPPPAAEVAKPAAPASPAPGAAAPAVPAPPPDAPE. Residues 41–60 are compositionally biased toward low complexity; the sequence is AEVAKPAAPASPAPGAAAPA. 5 helical membrane passes run 326–346, 356–376, 422–442, 459–479, and 498–518; these read IDYG…LYVM, WGVA…PLTY, LGGC…YAAL, LTAH…SFVM, and FFPG…TLYI.

It belongs to the OXA1/ALB3/YidC family. Type 1 subfamily. Interacts with the Sec translocase complex via SecD. Specifically interacts with transmembrane segments of nascent integral membrane proteins during membrane integration.

It localises to the cell inner membrane. Its function is as follows. Required for the insertion and/or proper folding and/or complex formation of integral membrane proteins into the membrane. Involved in integration of membrane proteins that insert both dependently and independently of the Sec translocase complex, as well as at least some lipoproteins. Aids folding of multispanning membrane proteins. In Anaeromyxobacter sp. (strain K), this protein is Membrane protein insertase YidC.